The following is a 463-amino-acid chain: Glutamate--tRNA ligase (463 aa).

The 'HIGH' region motif lies at 8–18 (PSPTGYLHIGG). The 'KMSKS' region signature appears at 236–240 (RLSKR). K239 provides a ligand contact to ATP.

Belongs to the class-I aminoacyl-tRNA synthetase family. Glutamate--tRNA ligase type 1 subfamily. Monomer.

It is found in the cytoplasm. The catalysed reaction is tRNA(Glu) + L-glutamate + ATP = L-glutamyl-tRNA(Glu) + AMP + diphosphate. Its function is as follows. Catalyzes the attachment of glutamate to tRNA(Glu) in a two-step reaction: glutamate is first activated by ATP to form Glu-AMP and then transferred to the acceptor end of tRNA(Glu). This chain is Glutamate--tRNA ligase, found in Nitrosomonas europaea (strain ATCC 19718 / CIP 103999 / KCTC 2705 / NBRC 14298).